Consider the following 117-residue polypeptide: MTRIKRGYIARRRRTKIRLFASSFRGAHSRLTRTMTQQRIRALVSAHRDRGRRKRDFRRLWITRINAVIQEMEVFNSYNRFIHNLYKKQVLLNRKILAQIALLNRSCLYTISNEIIK.

The protein belongs to the bacterial ribosomal protein bL20 family.

Its subcellular location is the plastid. It localises to the chloroplast. Binds directly to 23S ribosomal RNA and is necessary for the in vitro assembly process of the 50S ribosomal subunit. It is not involved in the protein synthesizing functions of that subunit. This chain is Large ribosomal subunit protein bL20c, found in Aethionema grandiflorum (Persian stone-cress).